Reading from the N-terminus, the 465-residue chain is Argininosuccinate lyase (465 aa).

It belongs to the lyase 1 family. Argininosuccinate lyase subfamily.

Its subcellular location is the cytoplasm. The enzyme catalyses 2-(N(omega)-L-arginino)succinate = fumarate + L-arginine. It participates in amino-acid biosynthesis; L-arginine biosynthesis; L-arginine from L-ornithine and carbamoyl phosphate: step 3/3. In Methanosphaera stadtmanae (strain ATCC 43021 / DSM 3091 / JCM 11832 / MCB-3), this protein is Argininosuccinate lyase.